Consider the following 239-residue polypeptide: 3,4-dihydroxyphthalate decarboxylase (239 aa).

The active-site Proton donor/acceptor is Glu84. A divalent metal cation-binding residues include Glu84, His103, His105, and His171.

Belongs to the aldolase class II family. A divalent metal cation serves as cofactor.

It carries out the reaction 3,4-dihydroxyphthalate + H(+) = 3,4-dihydroxybenzoate + CO2. The protein operates within xenobiotic degradation; phthalate degradation. Its function is as follows. Catalyzes the decarboxylation of 3,4-dihydroxyphthalate to protocatechuate (3,4-dihydroxybenzoate) during phthalate metabolism. This is 3,4-dihydroxyphthalate decarboxylase from Terrabacter sp. (strain DBF63).